The sequence spans 447 residues: Phosphoglucosamine mutase (447 aa).

The active-site Phosphoserine intermediate is Ser-102. Ser-102, Asp-241, Asp-243, and Asp-245 together coordinate Mg(2+). Ser-102 is modified (phosphoserine).

Belongs to the phosphohexose mutase family. Mg(2+) serves as cofactor. Activated by phosphorylation.

It carries out the reaction alpha-D-glucosamine 1-phosphate = D-glucosamine 6-phosphate. Functionally, catalyzes the conversion of glucosamine-6-phosphate to glucosamine-1-phosphate. This Delftia acidovorans (strain DSM 14801 / SPH-1) protein is Phosphoglucosamine mutase.